Here is a 330-residue protein sequence, read N- to C-terminus: T-cell leukemia homeobox protein 1 (330 aa).

The segment at 186 to 207 is disordered; sequence DRFTGHPYQNRTPPKKKKPRTS. The homeobox DNA-binding region spans 201–260; it reads KKKPRTSFTRLQICELEKRFHRQKYLASAERAALAKALKMTDAQVKTWFQNRRTKWRRQT. Lys-236 is subject to N6-acetyllysine.

Interacts with MEIS1, MEIS2, PBX1, PBX2 and PBX3.

It localises to the nucleus. Controls the genesis of the spleen. Binds to the DNA sequence 5'-GGCGGTAAGTGG-3'. The sequence is that of T-cell leukemia homeobox protein 1 (TLX1) from Homo sapiens (Human).